The primary structure comprises 210 residues: ATP phosphoribosyltransferase (210 aa).

It belongs to the ATP phosphoribosyltransferase family. Short subfamily. In terms of assembly, heteromultimer composed of HisG and HisZ subunits.

The protein localises to the cytoplasm. The catalysed reaction is 1-(5-phospho-beta-D-ribosyl)-ATP + diphosphate = 5-phospho-alpha-D-ribose 1-diphosphate + ATP. It participates in amino-acid biosynthesis; L-histidine biosynthesis; L-histidine from 5-phospho-alpha-D-ribose 1-diphosphate: step 1/9. Functionally, catalyzes the condensation of ATP and 5-phosphoribose 1-diphosphate to form N'-(5'-phosphoribosyl)-ATP (PR-ATP). Has a crucial role in the pathway because the rate of histidine biosynthesis seems to be controlled primarily by regulation of HisG enzymatic activity. This is ATP phosphoribosyltransferase from Bacillus cytotoxicus (strain DSM 22905 / CIP 110041 / 391-98 / NVH 391-98).